Here is a 338-residue protein sequence, read N- to C-terminus: UDP-3-O-acylglucosamine N-acyltransferase (338 aa).

Catalysis depends on His239, which acts as the Proton acceptor.

Belongs to the transferase hexapeptide repeat family. LpxD subfamily. In terms of assembly, homotrimer.

The catalysed reaction is a UDP-3-O-[(3R)-3-hydroxyacyl]-alpha-D-glucosamine + a (3R)-hydroxyacyl-[ACP] = a UDP-2-N,3-O-bis[(3R)-3-hydroxyacyl]-alpha-D-glucosamine + holo-[ACP] + H(+). It functions in the pathway bacterial outer membrane biogenesis; LPS lipid A biosynthesis. Its function is as follows. Catalyzes the N-acylation of UDP-3-O-acylglucosamine using 3-hydroxyacyl-ACP as the acyl donor. Is involved in the biosynthesis of lipid A, a phosphorylated glycolipid that anchors the lipopolysaccharide to the outer membrane of the cell. This Xylella fastidiosa (strain M12) protein is UDP-3-O-acylglucosamine N-acyltransferase.